Consider the following 461-residue polypeptide: Protein-serine O-palmitoleoyltransferase porcupine (461 aa).

At 1–17 the chain is on the cytoplasmic side; it reads MATFSRQEFFQQLLQGC. A helical transmembrane segment spans residues 18–38; it reads LLPTAQQGLDQIWLLLAICLA. The Extracellular portion of the chain corresponds to 39–66; the sequence is CRLLWRLGLPSYLKHASTVAGGFFSLYH. The helical transmembrane segment at 67–87 threads the bilayer; sequence FFQLHMVWVVLLSLLCYLVLF. Over 88 to 95 the chain is Cytoplasmic; sequence LCRHSSHR. The helical transmembrane segment at 96-116 threads the bilayer; the sequence is GVFLSVTILIYLLMGEMHMVD. Topologically, residues 117-152 are extracellular; the sequence is TVTWHKMRGAQMIVAMKAVSLGFDLDRGEVGTVPSP. Residues 153 to 173 traverse the membrane as a helical segment; it reads VEFMGYLYFVGTIVFGPWISF. Residues 174–198 are Cytoplasmic-facing; it reads HSYLQAVQGRPLSCRWLQKVARSLA. Cys187 is lipidated: S-palmitoyl cysteine. A helical transmembrane segment spans residues 199–219; it reads LALLCLVLSTCVGPYLFPYFI. At 220 to 252 the chain is on the extracellular side; sequence PLNGDRLLRNKKRKARGTMVRWLRAYESAVSFH. Residues 253-273 form a helical membrane-spanning segment; the sequence is FSNYFVGFLSEATATLAGAGF. At 274 to 337 the chain is on the cytoplasmic side; sequence TEEKDHLEWD…SAVLVTYAAS (64 aa). A helical transmembrane segment spans residues 338–358; that stretch reads ALLHGFSFHLAAVLLSLAFIT. Residue His341 is part of the active site. Over 359 to 396 the chain is Extracellular; it reads YVEHVLRKRLARILSACVLSKRCPPDCSHQHRLGLGVR. Residues 397-417 form a helical membrane-spanning segment; sequence ALNLLFGALAIFHLAYLGSLF. Residues 418-461 lie on the Cytoplasmic side of the membrane; the sequence is DVDVDDTTEEQGYGMAYTVHKWSELSWASHWVTFGCWIFYRLIG.

Belongs to the membrane-bound acyltransferase family. Porcupine subfamily. In terms of assembly, interacts with WNT1, WNT3, WNT3A, WNT4, WNT5A, WNT5B, WNT6, WNT7A and WNT7B. Isoform 1 is expressed in fetal brain, brain, amygdala, caudate nucleus, cerebellum, hippocampus, pituitary, thalamus, heart, skeletal muscle and testis. Isoform 4 is expressed in amygdala, corpus callosum, hippocampus, spinal cord, kidney, liver, lung, spleen, uterus, testis. Isoform 2 and isoform 3 are expressed in substantia negra, spinal cord, heart and lung.

The protein resides in the endoplasmic reticulum membrane. The enzyme catalyses [Wnt protein]-L-serine + (9Z)-hexadecenoyl-CoA = [Wnt protein]-O-(9Z)-hexadecenoyl-L-serine + CoA. Protein-serine O-palmitoleoyltransferase that acts as a key regulator of the Wnt signaling pathway by mediating the attachment of palmitoleate, a 16-carbon monounsaturated fatty acid (C16:1(9Z)), to Wnt proteins. Serine palmitoleoylation of WNT proteins is required for efficient binding to frizzled receptors. The polypeptide is Protein-serine O-palmitoleoyltransferase porcupine (Homo sapiens (Human)).